The sequence spans 308 residues: MRKIIVGSRSSKLAMTQTKWVIEQLKQAGAPYEFEIKNIITKGDRILDVTLSKVGGKGLFVKEIEQQMIDEDIDFAVHSMKDLPSELPTGLIIGATPSRVDARDALITTTGGGLDSLPEGAIVGTSSLRRGSQLLKLRPDLKIESIRGNIDTRLEKLKTGPFDGILLAAAGLQRMGWSEDIVSEYISTDDMIPAVGQGILAIECRANDQEVRDLLNLIHDQMTEKVAFAERSFLAAIEGSCHVPVGGFATINEDLSTTLVGFLGSVDGQQILLERETSLDPMQLGQTVATRLLDAGGREILASLPDDL.

Position 241 is an S-(dipyrrolylmethanemethyl)cysteine (Cys241).

This sequence belongs to the HMBS family. Monomer. Dipyrromethane serves as cofactor.

The catalysed reaction is 4 porphobilinogen + H2O = hydroxymethylbilane + 4 NH4(+). The protein operates within porphyrin-containing compound metabolism; protoporphyrin-IX biosynthesis; coproporphyrinogen-III from 5-aminolevulinate: step 2/4. Functionally, tetrapolymerization of the monopyrrole PBG into the hydroxymethylbilane pre-uroporphyrinogen in several discrete steps. This chain is Porphobilinogen deaminase, found in Exiguobacterium sibiricum (strain DSM 17290 / CCUG 55495 / CIP 109462 / JCM 13490 / 255-15).